The following is a 775-amino-acid chain: Subtilisin-like protease SBT3.8 (775 aa).

A signal peptide spans 1-26; that stretch reads MKSCRTLIFVAIILNGLSTFVAHAGA. The propeptide at 27–109 is activation peptide; it reads ESKVHIVYLG…VTPDSFYQLD (83 aa). Residues 30–108 enclose the Inhibitor I9 domain; it reads VHIVYLGEKQ…HVTPDSFYQL (79 aa). The 510-residue stretch at 113–622 folds into the Peptidase S8 domain; that stretch reads TWDYLGLSVA…GGLVNPEKAA (510 aa). An N-linked (GlcNAc...) asparagine glycan is attached at asparagine 129. Aspartate 143 serves as the catalytic Charge relay system. N-linked (GlcNAc...) asparagine glycans are attached at residues asparagine 174 and asparagine 202. Histidine 218 acts as the Charge relay system in catalysis. The PA domain maps to 384–476; the sequence is SLVYPENPGN…VDYELGTDIL (93 aa). N-linked (GlcNAc...) asparagine glycosylation is found at asparagine 395, asparagine 410, and asparagine 538. Serine 553 acts as the Charge relay system in catalysis. Asparagine 645, asparagine 721, and asparagine 756 each carry an N-linked (GlcNAc...) asparagine glycan.

Belongs to the peptidase S8 family.

Its subcellular location is the secreted. The sequence is that of Subtilisin-like protease SBT3.8 from Arabidopsis thaliana (Mouse-ear cress).